The chain runs to 231 residues: MLYGFTWDTGNGELAFAISILPMLLMGLITTLQAAFLGFFVACVLGMVFAVLRGMRTRWVAWPAAVLIEFIRDTPLIAQLFFLYYVLPEYGIIFPAFLTGALALGIQYSAYISEVYRGGIQAVDHGQREAAKSLDLPPARTFTHVILPQAIPRVIPALGNYLVSIMKDVPVLSVVTIVEMLNAAKIIGDQTFNYLVPLSMVGGIYLILTIVASALVRIVDVNLPKRGVPLR.

6 helical membrane-spanning segments follow: residues 9–29 (TGNG…MGLI), 32–52 (LQAA…FAVL), 64–84 (AAVL…FFLY), 86–106 (VLPE…ALGI), 161–181 (YLVS…VEML), and 196–216 (VPLS…SALV). Residues 28 to 217 (LITTLQAAFL…LTIVASALVR (190 aa)) form the ABC transmembrane type-1 domain.

This sequence belongs to the binding-protein-dependent transport system permease family. HisMQ subfamily.

It localises to the cell inner membrane. Its function is as follows. Probably part of the binding-protein-dependent transport system y4tEFGH for an amino acid. Probably responsible for the translocation of the substrate across the membrane. The polypeptide is Probable amino-acid ABC transporter permease protein y4tG (Sinorhizobium fredii (strain NBRC 101917 / NGR234)).